Here is a 235-residue protein sequence, read N- to C-terminus: Purine nucleoside phosphorylase DeoD-type (235 aa).

His4 serves as a coordination point for a purine D-ribonucleoside. Residues Gly20, Arg24, Arg43, and Arg87–Thr90 each bind phosphate. A purine D-ribonucleoside contacts are provided by residues Glu162, Glu179–Glu181, and Ser203–Asp204. Asp204 (proton donor) is an active-site residue.

It belongs to the PNP/UDP phosphorylase family. Homohexamer; trimer of homodimers.

The enzyme catalyses a purine D-ribonucleoside + phosphate = a purine nucleobase + alpha-D-ribose 1-phosphate. The catalysed reaction is a purine 2'-deoxy-D-ribonucleoside + phosphate = a purine nucleobase + 2-deoxy-alpha-D-ribose 1-phosphate. Its function is as follows. Catalyzes the reversible phosphorolytic breakdown of the N-glycosidic bond in the beta-(deoxy)ribonucleoside molecules, with the formation of the corresponding free purine bases and pentose-1-phosphate. The protein is Purine nucleoside phosphorylase DeoD-type of Bacillus cereus (strain ATCC 14579 / DSM 31 / CCUG 7414 / JCM 2152 / NBRC 15305 / NCIMB 9373 / NCTC 2599 / NRRL B-3711).